The sequence spans 75 residues: Translational regulator CsrA (75 aa).

It belongs to the CsrA/RsmA family. In terms of assembly, homodimer; the beta-strands of each monomer intercalate to form a hydrophobic core, while the alpha-helices form wings that extend away from the core.

It localises to the cytoplasm. Functionally, a translational regulator that binds mRNA to regulate translation initiation and/or mRNA stability. Usually binds in the 5'-UTR at or near the Shine-Dalgarno sequence preventing ribosome-binding, thus repressing translation. Its main target seems to be the major flagellin gene, while its function is anatagonized by FliW. The sequence is that of Translational regulator CsrA from Treponema denticola (strain ATCC 35405 / DSM 14222 / CIP 103919 / JCM 8153 / KCTC 15104).